The following is a 91-amino-acid chain: Small ribosomal subunit protein bS16 (91 aa).

It belongs to the bacterial ribosomal protein bS16 family.

This is Small ribosomal subunit protein bS16 from Streptococcus mutans serotype c (strain ATCC 700610 / UA159).